We begin with the raw amino-acid sequence, 632 residues long: Myrcene synthase TPS3FN, chloroplastic (632 aa).

A chloroplast-targeting transit peptide spans 1-55 (MHCMAVHQFSPSIVSSLPTISTYNNNHFCRFFTPKTSISPISKTKSKSSTCYPIQ). Residues R343, D380, D384, R524, and D527 each contribute to the (2E)-geranyl diphosphate site. Mg(2+)-binding residues include D380 and D384. A DDXXD motif motif is present at residues 380 to 384 (DDIYD). Residues D527, T531, and E535 each contribute to the Mg(2+) site.

It belongs to the terpene synthase family. Tpsb subfamily. Mg(2+) serves as cofactor. Mn(2+) is required as a cofactor. Expressed in glandular trichomes two to four weeks after flowering onset.

Its subcellular location is the plastid. It is found in the chloroplast. It carries out the reaction (2E)-geranyl diphosphate = beta-myrcene + diphosphate. The protein operates within secondary metabolite biosynthesis; terpenoid biosynthesis. Involved in monoterpene (C10) olefins biosynthesis, constituants of cannabinoids and terpenoids-rich resins. Catalyzes strictly the conversion of (2E)-geranyl diphosphate to beta-myrcene. This is Myrcene synthase TPS3FN, chloroplastic from Cannabis sativa (Hemp).